The primary structure comprises 609 residues: Dihydroxy-acid dehydratase (609 aa).

Asp81 is a binding site for Mg(2+). Residue Cys122 participates in [2Fe-2S] cluster binding. Asp123 and Lys124 together coordinate Mg(2+). Lys124 is modified (N6-carboxylysine). A [2Fe-2S] cluster-binding site is contributed by Cys195. Glu491 lines the Mg(2+) pocket. Ser517 serves as the catalytic Proton acceptor.

It belongs to the IlvD/Edd family. Homodimer. Requires [2Fe-2S] cluster as cofactor. Mg(2+) is required as a cofactor.

The enzyme catalyses (2R)-2,3-dihydroxy-3-methylbutanoate = 3-methyl-2-oxobutanoate + H2O. It carries out the reaction (2R,3R)-2,3-dihydroxy-3-methylpentanoate = (S)-3-methyl-2-oxopentanoate + H2O. It functions in the pathway amino-acid biosynthesis; L-isoleucine biosynthesis; L-isoleucine from 2-oxobutanoate: step 3/4. The protein operates within amino-acid biosynthesis; L-valine biosynthesis; L-valine from pyruvate: step 3/4. Its function is as follows. Functions in the biosynthesis of branched-chain amino acids. Catalyzes the dehydration of (2R,3R)-2,3-dihydroxy-3-methylpentanoate (2,3-dihydroxy-3-methylvalerate) into 2-oxo-3-methylpentanoate (2-oxo-3-methylvalerate) and of (2R)-2,3-dihydroxy-3-methylbutanoate (2,3-dihydroxyisovalerate) into 2-oxo-3-methylbutanoate (2-oxoisovalerate), the penultimate precursor to L-isoleucine and L-valine, respectively. The polypeptide is Dihydroxy-acid dehydratase (Acinetobacter baumannii (strain AB307-0294)).